A 927-amino-acid polypeptide reads, in one-letter code: Alpha-catenin-like protein hmp-1 (927 aa).

2 coiled-coil regions span residues 319-354 (TREN…RRDD) and 672-696 (QENQ…QIDI). A disordered region spans residues 901 to 927 (RNEIETGRDSDDEELDRRHQQRINGRL).

Belongs to the vinculin/alpha-catenin family. As to quaternary structure, component of a core catenin-cadherin complex consisting of hmr-1, hmp-1 and hmp-2; the complex localizes to adherens junctions. May interact with hmp-2. In terms of tissue distribution, epidermal cells.

The protein resides in the cell junction. Its subcellular location is the adherens junction. It is found in the cytoplasm. In terms of biological role, required for cell migration during body enclosure and cell shape changes during body elongation. Required for proper localization of other junctional components, such as pac-1. This is Alpha-catenin-like protein hmp-1 (hmp-1) from Caenorhabditis elegans.